The primary structure comprises 129 residues: Glycerol-3-phosphate cytidylyltransferase (129 aa).

CTP is bound by residues 9–10 and 14–17; these read TF and HYGH. Lys44 serves as a coordination point for substrate. Lys46 is a binding site for CTP. Lys77 lines the substrate pocket. 113 to 120 contributes to the CTP binding site; sequence RTDGISTT.

This sequence belongs to the cytidylyltransferase family. As to quaternary structure, homodimer.

Its subcellular location is the cytoplasm. The enzyme catalyses sn-glycerol 3-phosphate + CTP + H(+) = CDP-glycerol + diphosphate. The protein operates within cell wall biogenesis; poly(ribitol phosphate) teichoic acid biosynthesis. In terms of biological role, catalyzes the transfer of the cytidylyl group of CTP to sn-glycerol 3-phosphate so the activated glycerol 3-phosphate can be used for teichoic acid synthesis, via incorporation into both the linkage unit by TarB and TarF. This Bacillus spizizenii (strain ATCC 23059 / NRRL B-14472 / W23) (Bacillus subtilis subsp. spizizenii) protein is Glycerol-3-phosphate cytidylyltransferase (tarD).